A 248-amino-acid polypeptide reads, in one-letter code: tRNA pseudouridine synthase A (248 aa).

The active-site Nucleophile is the Asp-53. Position 111 (Tyr-111) interacts with substrate.

This sequence belongs to the tRNA pseudouridine synthase TruA family. Homodimer.

The enzyme catalyses uridine(38/39/40) in tRNA = pseudouridine(38/39/40) in tRNA. Its function is as follows. Formation of pseudouridine at positions 38, 39 and 40 in the anticodon stem and loop of transfer RNAs. The sequence is that of tRNA pseudouridine synthase A from Listeria innocua serovar 6a (strain ATCC BAA-680 / CLIP 11262).